Reading from the N-terminus, the 186-residue chain is Archaemetzincin (186 aa).

A Zn(2+)-binding site is contributed by His-136. Residue Glu-137 is the Proton acceptor of the active site. The Zn(2+) site is built by His-140, His-146, Cys-147, Cys-152, Cys-171, and Cys-174.

The protein belongs to the peptidase M54 family. In terms of assembly, monomer. Requires Zn(2+) as cofactor.

In terms of biological role, probable zinc metalloprotease whose natural substrate is unknown. In Thermococcus kodakarensis (strain ATCC BAA-918 / JCM 12380 / KOD1) (Pyrococcus kodakaraensis (strain KOD1)), this protein is Archaemetzincin.